The following is a 250-amino-acid chain: Green-light absorbing proteorhodopsin (250 aa).

The signal sequence occupies residues 1–18; it reads MGKLLLILGSVIALPTFA. Residues 19–29 are Extracellular-facing; sequence AGGGDLDASDY. The helical transmembrane segment at 30–53 threads the bilayer; sequence TGVSFWLVTAALLASTVFFFVERD. Residues 54–58 lie on the Cytoplasmic side of the membrane; that stretch reads RVSAK. A helical transmembrane segment spans residues 59 to 87; sequence WKTSLTVSGLVTGIAFWHYMYMRGVWIET. Topologically, residues 88 to 90 are extracellular; the sequence is GDS. The helical transmembrane segment at 91–118 threads the bilayer; the sequence is PTVFRYIDWLLTVPLLICEFYLILAAAT. The Cytoplasmic portion of the chain corresponds to 119-121; the sequence is NVA. A helical transmembrane segment spans residues 122-144; it reads GSLFKKLLVGSLVMLVFGYMGEA. The Extracellular segment spans residues 145–147; that stretch reads GIM. Residues 148-177 form a helical membrane-spanning segment; the sequence is AAWPAFIIGCLAWVYMIYELWAGEGKSACN. Residues 178-180 lie on the Cytoplasmic side of the membrane; sequence TAS. Residues 181-208 form a helical membrane-spanning segment; sequence PAVQSAYNTMMYIIIFGWAIYPVGYFTG. Residues 209-218 are Extracellular-facing; it reads YLMGDGGSAL. Residues 219-249 traverse the membrane as a helical segment; sequence NLNLIYNLADFVNKILFGLIIWNVAVKESSN. At Lys232 the chain carries N6-(retinylidene)lysine. A topological domain (cytoplasmic) is located at residue Ala250.

Belongs to the archaeal/bacterial/fungal opsin family. Homopentamer. GPR protomers assemble into a pentamer around a central pore with a C5 symmetry axis. Contains one covalently linked retinal chromophore per subunit.

It localises to the cell membrane. Functionally, light-driven proton pump. The sequence is that of Green-light absorbing proteorhodopsin from Unknown prokaryotic organism.